A 161-amino-acid polypeptide reads, in one-letter code: Endoribonuclease YbeY (161 aa).

Residues His121, His125, and His131 each coordinate Zn(2+).

Belongs to the endoribonuclease YbeY family. It depends on Zn(2+) as a cofactor.

Its subcellular location is the cytoplasm. Single strand-specific metallo-endoribonuclease involved in late-stage 70S ribosome quality control and in maturation of the 3' terminus of the 16S rRNA. The protein is Endoribonuclease YbeY of Xanthomonas euvesicatoria pv. vesicatoria (strain 85-10) (Xanthomonas campestris pv. vesicatoria).